The sequence spans 493 residues: Alpha-amylase-related protein (493 aa).

Residues 1–19 form the signal peptide; the sequence is MFKFATAVILCLAASSTLA. A Pyrrolidone carboxylic acid modification is found at Q20. A disulfide bridge links C47 with C103. Ca(2+) contacts are provided by N117, Q168, and D177. Residues C156 and C170 are joined by a disulfide bond. Position 205 (R205) interacts with chloride. D207 functions as the Nucleophile in the catalytic mechanism. A Ca(2+)-binding site is contributed by H211. Catalysis depends on E244, which acts as the Proton donor. Positions 307 and 342 each coordinate chloride. 3 disulfides stabilise this stretch: C375–C381, C417–C440, and C447–C459.

This sequence belongs to the glycosyl hydrolase 13 family. Monomer. It depends on Ca(2+) as a cofactor. Chloride serves as cofactor.

Its subcellular location is the secreted. It carries out the reaction Endohydrolysis of (1-&gt;4)-alpha-D-glucosidic linkages in polysaccharides containing three or more (1-&gt;4)-alpha-linked D-glucose units.. The polypeptide is Alpha-amylase-related protein (Amyrel) (Drosophila ananassae (Fruit fly)).